Here is a 129-residue protein sequence, read N- to C-terminus: Cocaine- and amphetamine-regulated transcript protein (129 aa).

An N-terminal signal peptide occupies residues 1 to 27; that stretch reads MESSRLRLLPLLGAALLLLLPLLGARA. The residue at position 41 (Tyr-41) is a Phosphotyrosine. Ser-48 carries the phosphoserine modification. 3 disulfide bridges follow: Cys-95–Cys-113, Cys-101–Cys-121, and Cys-115–Cys-128.

This sequence belongs to the CART family.

It localises to the secreted. Satiety factor closely associated with the actions of leptin and neuropeptide y; this anorectic peptide inhibits both normal and starvation-induced feeding and completely blocks the feeding response induced by neuropeptide Y and regulated by leptin in the hypothalamus. This chain is Cocaine- and amphetamine-regulated transcript protein (Cartpt), found in Mus musculus (Mouse).